The sequence spans 327 residues: Ribose 1,5-bisphosphate isomerase (327 aa).

Substrate-binding positions include 25 to 28 (RGAA) and Arg-68. Catalysis depends on Cys-133, which acts as the Proton acceptor. The active-site Proton donor is the Asp-202. Residues 212–213 (NK) and Lys-238 each bind substrate.

The protein belongs to the eIF-2B alpha/beta/delta subunits family. R15P isomerase subfamily.

It carries out the reaction alpha-D-ribose 1,5-bisphosphate = D-ribulose 1,5-bisphosphate. Functionally, isomerase involved in the non-carboxylating pentose bisphosphate pathway, a nucleoside degradation pathway present in some halophilic archaea. Catalyzes the isomerization of ribose 1,5-bisphosphate (R15P) to ribulose 1,5-bisphosphate (RuBP). In Haloterrigena turkmenica (strain ATCC 51198 / DSM 5511 / JCM 9101 / NCIMB 13204 / VKM B-1734 / 4k) (Halococcus turkmenicus), this protein is Ribose 1,5-bisphosphate isomerase.